The following is a 372-amino-acid chain: Innexin-16 (372 aa).

The next 4 helical transmembrane spans lie at 31–51, 106–126, 181–201, and 263–283; these read VVTTSILIAFSLLLFAKNYVG, VPFLLVIQALFFCVPRAFWII, LVMKLLILLNIVLQFFLLNSF, and IFIFLWFWFAFLLVATAGDFV. Asn352 is a glycosylation site (N-linked (GlcNAc...) asparagine).

The protein belongs to the pannexin family.

The protein resides in the cell membrane. Its subcellular location is the cell junction. The protein localises to the gap junction. In terms of biological role, structural component of the gap junctions. Required for signals downstream of defecation clock. This chain is Innexin-16 (inx-16), found in Caenorhabditis elegans.